The following is an 837-amino-acid chain: Translation initiation factor IF-2 (837 aa).

Over residues 97 to 139 (AEEIEAEQRRELEEQRAAEEAARLKAEQEARERAEEEARRQAE) the composition is skewed to basic and acidic residues. The tract at residues 97–253 (AEEIEAEQRR…QHGFQSPTGP (157 aa)) is disordered. Residues 140 to 175 (AAKAQTAETAAPAAAESASSAEPAQVVAAVEAAAPA) are compositionally biased toward low complexity. A compositionally biased stretch (basic and acidic residues) spans 176 to 197 (PERKKEEPRRVEKPRSDDDERR). Positions 198 to 208 (DRKHAQHRPSL) are enriched in basic residues. A compositionally biased stretch (basic and acidic residues) spans 219 to 229 (RSGEDEADGFR). Residues 230–244 (RGGRGGKSKLKKRNQ) show a composition bias toward basic residues. Residues 337 to 504 (ARAPVVTVMG…AVLLQAEILE (168 aa)) form the tr-type G domain. The interval 346–353 (GHVDHGKT) is G1. 346–353 (GHVDHGKT) serves as a coordination point for GTP. Residues 371–375 (GITQH) are G2. The tract at residues 392-395 (DTPG) is G3. GTP is bound by residues 392–396 (DTPGH) and 446–449 (NKID). The segment at 446 to 449 (NKID) is G4. The tract at residues 482 to 484 (SAK) is G5.

It belongs to the TRAFAC class translation factor GTPase superfamily. Classic translation factor GTPase family. IF-2 subfamily.

It is found in the cytoplasm. Its function is as follows. One of the essential components for the initiation of protein synthesis. Protects formylmethionyl-tRNA from spontaneous hydrolysis and promotes its binding to the 30S ribosomal subunits. Also involved in the hydrolysis of GTP during the formation of the 70S ribosomal complex. The protein is Translation initiation factor IF-2 of Stutzerimonas stutzeri (strain A1501) (Pseudomonas stutzeri).